Reading from the N-terminus, the 54-residue chain is Ovomucoid (54 aa).

One can recognise a Kazal-like domain in the interval 4 to 54 (VDCSEYPKPACTLEYRPLCGSDSKTYGNKCNFCNAVVESNGTLTLSHFGKC). Intrachain disulfides connect Cys6–Cys36, Cys14–Cys33, and Cys22–Cys54. N-linked (GlcNAc...) asparagine glycosylation is present at Asn43.

Its subcellular location is the secreted. This Alectoris chukar (Chukar partridge) protein is Ovomucoid.